Here is a 235-residue protein sequence, read N- to C-terminus: Lipoprotein-releasing system ATP-binding protein LolD (235 aa).

Residues 5-235 (LECRDIRKVY…LMTESASVEG (231 aa)) form the ABC transporter domain. Residue 41–48 (GSSGSGKS) participates in ATP binding.

It belongs to the ABC transporter superfamily. Lipoprotein translocase (TC 3.A.1.125) family. As to quaternary structure, the complex is composed of two ATP-binding proteins (LolD) and two transmembrane proteins (LolC and LolE).

It is found in the cell inner membrane. Its function is as follows. Part of the ABC transporter complex LolCDE involved in the translocation of mature outer membrane-directed lipoproteins, from the inner membrane to the periplasmic chaperone, LolA. Responsible for the formation of the LolA-lipoprotein complex in an ATP-dependent manner. The chain is Lipoprotein-releasing system ATP-binding protein LolD from Vibrio parahaemolyticus serotype O3:K6 (strain RIMD 2210633).